The primary structure comprises 372 residues: Erythronate-4-phosphate dehydrogenase (372 aa).

Substrate is bound by residues S45 and T66. D146 is an NAD(+) binding site. The active site involves R209. D233 provides a ligand contact to NAD(+). Residue E238 is part of the active site. The active-site Proton donor is the H255. Position 258 (G258) interacts with NAD(+). Y259 is a binding site for substrate.

It belongs to the D-isomer specific 2-hydroxyacid dehydrogenase family. PdxB subfamily. Homodimer.

The protein localises to the cytoplasm. The enzyme catalyses 4-phospho-D-erythronate + NAD(+) = (R)-3-hydroxy-2-oxo-4-phosphooxybutanoate + NADH + H(+). The protein operates within cofactor biosynthesis; pyridoxine 5'-phosphate biosynthesis; pyridoxine 5'-phosphate from D-erythrose 4-phosphate: step 2/5. Its function is as follows. Catalyzes the oxidation of erythronate-4-phosphate to 3-hydroxy-2-oxo-4-phosphonooxybutanoate. In Blochmanniella floridana, this protein is Erythronate-4-phosphate dehydrogenase.